A 441-amino-acid polypeptide reads, in one-letter code: Phosphoglucosamine mutase (441 aa).

Ser100 serves as the catalytic Phosphoserine intermediate. Positions 100, 239, 241, and 243 each coordinate Mg(2+). A Phosphoserine modification is found at Ser100.

Belongs to the phosphohexose mutase family. Requires Mg(2+) as cofactor. In terms of processing, activated by phosphorylation.

The catalysed reaction is alpha-D-glucosamine 1-phosphate = D-glucosamine 6-phosphate. Its function is as follows. Catalyzes the conversion of glucosamine-6-phosphate to glucosamine-1-phosphate. The protein is Phosphoglucosamine mutase of Ruthia magnifica subsp. Calyptogena magnifica.